We begin with the raw amino-acid sequence, 351 residues long: S-adenosylmethionine:tRNA ribosyltransferase-isomerase (351 aa).

Belongs to the QueA family. In terms of assembly, monomer.

The protein resides in the cytoplasm. It catalyses the reaction 7-aminomethyl-7-carbaguanosine(34) in tRNA + S-adenosyl-L-methionine = epoxyqueuosine(34) in tRNA + adenine + L-methionine + 2 H(+). It functions in the pathway tRNA modification; tRNA-queuosine biosynthesis. In terms of biological role, transfers and isomerizes the ribose moiety from AdoMet to the 7-aminomethyl group of 7-deazaguanine (preQ1-tRNA) to give epoxyqueuosine (oQ-tRNA). This is S-adenosylmethionine:tRNA ribosyltransferase-isomerase from Photobacterium profundum (strain SS9).